The sequence spans 336 residues: Dihydroorotate dehydrogenase (quinone) (336 aa).

FMN is bound by residues 62–66 (AGMDK) and T86. Position 66 (K66) interacts with substrate. Position 111-115 (111-115 (NRMGF)) interacts with substrate. FMN-binding residues include N139 and N172. N172 lines the substrate pocket. The active-site Nucleophile is the S175. Position 177 (N177) interacts with substrate. FMN-binding residues include K217 and T245. 246–247 (NT) serves as a coordination point for substrate. Residues G268, G297, and 318 to 319 (YS) each bind FMN.

This sequence belongs to the dihydroorotate dehydrogenase family. Type 2 subfamily. Monomer. It depends on FMN as a cofactor.

The protein resides in the cell membrane. The catalysed reaction is (S)-dihydroorotate + a quinone = orotate + a quinol. The protein operates within pyrimidine metabolism; UMP biosynthesis via de novo pathway; orotate from (S)-dihydroorotate (quinone route): step 1/1. Functionally, catalyzes the conversion of dihydroorotate to orotate with quinone as electron acceptor. This Buchnera aphidicola subsp. Schizaphis graminum (strain Sg) protein is Dihydroorotate dehydrogenase (quinone).